The primary structure comprises 508 residues: MGLPWYRVHTVVLNDPGRLLAVHIMHTALVSGWAGSMALYELAVFDPSDPVLDPMWRQGMFVIPFMTRLGITDSWGGWSISGGTVTNPGIWSYEGVAGAHIVFSGLCFLAAIWHWVYWDLEIFSDERTGKPSLDLPKIFGIHLFLAGVACFGFGAFHVTGLYGPGIWVSDPYGLTGKVQAVNPAWGAEGFDPFVPGGIASHHIAAGTLGILAGLFHLSVRPPQRLYKGLRMGNIETVLSSSIAAVFFAAFVVAGTMWYGSATTPIELFGPTRYQWDQGYFQQEIYRRVSNGLAENLSLSEAWSKIPEKLAFYDYIGNNPAKGGLFRAGSMDNGDGIAVGWLGHPVFRDKEGRELFVRRMPTFFETFPVVLVDEEGIVRADVPFRRAESKYSVEQVGVTVEFYGGELNGVSYSDPATVKKYARRSQLGEIFELDRATLKSDGVFRSSPRGWFTFGHATFALLFFFGHIWHGARTLFRDVFAGIDPDLDAQVEFGTFQKVGDPTTRKQAV.

The next 6 helical transmembrane spans lie at 21-36 (AVHIMHTALVSGWAGS), 101-115 (IVFSGLCFLAAIWHW), 140-156 (GIHLFLAGVACFGFGAF), 203-218 (IAAGTLGILAGLFHLS), 237-252 (VLSSSIAAVFFAAFVV), and 457-472 (TFALLFFFGHIWHGAR).

Belongs to the PsbB/PsbC family. PsbB subfamily. As to quaternary structure, PSII is composed of 1 copy each of membrane proteins PsbA, PsbB, PsbC, PsbD, PsbE, PsbF, PsbH, PsbI, PsbJ, PsbK, PsbL, PsbM, PsbT, PsbX, PsbY, PsbZ, Psb30/Ycf12, at least 3 peripheral proteins of the oxygen-evolving complex and a large number of cofactors. It forms dimeric complexes. It depends on Binds multiple chlorophylls. PSII binds additional chlorophylls, carotenoids and specific lipids. as a cofactor.

Its subcellular location is the plastid. The protein resides in the chloroplast thylakoid membrane. In terms of biological role, one of the components of the core complex of photosystem II (PSII). It binds chlorophyll and helps catalyze the primary light-induced photochemical processes of PSII. PSII is a light-driven water:plastoquinone oxidoreductase, using light energy to abstract electrons from H(2)O, generating O(2) and a proton gradient subsequently used for ATP formation. The protein is Photosystem II CP47 reaction center protein of Agrostis stolonifera (Creeping bentgrass).